A 294-amino-acid chain; its full sequence is Shikimate dehydrogenase (NADP(+)) (294 aa).

Shikimate-binding positions include 25–27 (SAS) and Thr72. The active-site Proton acceptor is the Lys76. Residues Asn97 and Asp112 each contribute to the shikimate site. Residues 136 to 140 (GAGGA) and Thr234 contribute to the NADP(+) site. Residue Tyr236 coordinates shikimate. Gly257 is a binding site for NADP(+).

Belongs to the shikimate dehydrogenase family. As to quaternary structure, homodimer.

The enzyme catalyses shikimate + NADP(+) = 3-dehydroshikimate + NADPH + H(+). Its pathway is metabolic intermediate biosynthesis; chorismate biosynthesis; chorismate from D-erythrose 4-phosphate and phosphoenolpyruvate: step 4/7. Its function is as follows. Involved in the biosynthesis of the chorismate, which leads to the biosynthesis of aromatic amino acids. Catalyzes the reversible NADPH linked reduction of 3-dehydroshikimate (DHSA) to yield shikimate (SA). The polypeptide is Shikimate dehydrogenase (NADP(+)) (Symbiobacterium thermophilum (strain DSM 24528 / JCM 14929 / IAM 14863 / T)).